A 607-amino-acid polypeptide reads, in one-letter code: UvrABC system protein C (607 aa).

A GIY-YIG domain is found at 19–97 (TLSGVYQMRD…IKQYQPKFNI (79 aa)). One can recognise a UVR domain in the interval 205 to 240 (EHLLQTLTEHMLQASAAQQYERAAIVRDQISELRTI).

Belongs to the UvrC family. Interacts with UvrB in an incision complex.

It is found in the cytoplasm. The UvrABC repair system catalyzes the recognition and processing of DNA lesions. UvrC both incises the 5' and 3' sides of the lesion. The N-terminal half is responsible for the 3' incision and the C-terminal half is responsible for the 5' incision. The sequence is that of UvrABC system protein C from Dichelobacter nodosus (strain VCS1703A).